The chain runs to 622 residues: Polypeptide N-acetylgalactosaminyltransferase 18 (622 aa).

Residues 1 to 12 (MVCTRKTKTLVS) are Cytoplasmic-facing. Residues 13–35 (TCVILSGMTNIICLLYVGWVTNY) traverse the membrane as a helical; Signal-anchor for type II membrane protein segment. At 36-622 (IASVYVRGQE…ITNVLRSLVS (587 aa)) the chain is on the lumenal side. 5 disulfide bridges follow: Cys144–Cys392, Cys383–Cys462, Cys497–Cys513, Cys545–Cys558, and Cys586–Cys606. A glycan (N-linked (GlcNAc...) asparagine) is linked at Asn146. The catalytic subdomain A stretch occupies residues 153–267 (LPEVSIVFIF…VGWAEPVLTR (115 aa)). Residue Asp194 participates in substrate binding. Asn195 is a glycosylation site (N-linked (GlcNAc...) asparagine). 2 residues coordinate Mn(2+): Asp251 and His253. Asn320 carries N-linked (GlcNAc...) asparagine glycosylation. Positions 324 to 400 (PIRSPALIGC…PCSRIAHIER (77 aa)) are catalytic subdomain B. Position 397 (His397) interacts with Mn(2+). Positions 400 and 405 each coordinate substrate. In terms of domain architecture, Ricin B-type lectin spans 484-614 (AYGVLQNSLK…KCSGQHWTIT (131 aa)).

Belongs to the glycosyltransferase 2 family. GalNAc-T subfamily. Mn(2+) is required as a cofactor.

It localises to the golgi apparatus membrane. The enzyme catalyses L-seryl-[protein] + UDP-N-acetyl-alpha-D-galactosamine = a 3-O-[N-acetyl-alpha-D-galactosaminyl]-L-seryl-[protein] + UDP + H(+). The catalysed reaction is L-threonyl-[protein] + UDP-N-acetyl-alpha-D-galactosamine = a 3-O-[N-acetyl-alpha-D-galactosaminyl]-L-threonyl-[protein] + UDP + H(+). It functions in the pathway protein modification; protein glycosylation. Functionally, catalyzes the initial reaction in O-linked oligosaccharide biosynthesis, the transfer of an N-acetyl-D-galactosamine (GalNAc) residue from UDP-GalNAc to a serine or threonine residue on the protein receptor. In Mus musculus (Mouse), this protein is Polypeptide N-acetylgalactosaminyltransferase 18 (Galnt18).